The chain runs to 266 residues: Tryptophan synthase alpha chain (266 aa).

Residues Glu-49 and Asp-60 each act as proton acceptor in the active site.

The protein belongs to the TrpA family. Tetramer of two alpha and two beta chains.

It catalyses the reaction (1S,2R)-1-C-(indol-3-yl)glycerol 3-phosphate + L-serine = D-glyceraldehyde 3-phosphate + L-tryptophan + H2O. Its pathway is amino-acid biosynthesis; L-tryptophan biosynthesis; L-tryptophan from chorismate: step 5/5. Its function is as follows. The alpha subunit is responsible for the aldol cleavage of indoleglycerol phosphate to indole and glyceraldehyde 3-phosphate. The chain is Tryptophan synthase alpha chain from Opitutus terrae (strain DSM 11246 / JCM 15787 / PB90-1).